We begin with the raw amino-acid sequence, 89 residues long: MSLSTEAKAKILAEFGRGANDTGSTEVQVALLTAQINHLQDHFKEHIHDHHSRRGLLRMVSARRKLLAYLKRTEAARYNELIQKLGLRR.

This sequence belongs to the universal ribosomal protein uS15 family. Part of the 30S ribosomal subunit. Forms a bridge to the 50S subunit in the 70S ribosome, contacting the 23S rRNA.

One of the primary rRNA binding proteins, it binds directly to 16S rRNA where it helps nucleate assembly of the platform of the 30S subunit by binding and bridging several RNA helices of the 16S rRNA. In terms of biological role, forms an intersubunit bridge (bridge B4) with the 23S rRNA of the 50S subunit in the ribosome. The protein is Small ribosomal subunit protein uS15 of Shewanella sp. (strain ANA-3).